Here is a 270-residue protein sequence, read N- to C-terminus: Aliphatic sulfonates import ATP-binding protein SsuB 3 (270 aa).

The ABC transporter domain occupies 17-238 (LAVRNLKKAF…VRGSHRLAAL (222 aa)). 49 to 56 (GRSGCGKS) serves as a coordination point for ATP.

It belongs to the ABC transporter superfamily. Aliphatic sulfonates importer (TC 3.A.1.17.2) family. In terms of assembly, the complex is composed of two ATP-binding proteins (SsuB), two transmembrane proteins (SsuC) and a solute-binding protein (SsuA).

The protein resides in the cell inner membrane. The enzyme catalyses ATP + H2O + aliphatic sulfonate-[sulfonate-binding protein]Side 1 = ADP + phosphate + aliphatic sulfonateSide 2 + [sulfonate-binding protein]Side 1.. Its function is as follows. Part of the ABC transporter complex SsuABC involved in aliphatic sulfonates import. Responsible for energy coupling to the transport system. This is Aliphatic sulfonates import ATP-binding protein SsuB 3 from Pseudomonas savastanoi pv. phaseolicola (strain 1448A / Race 6) (Pseudomonas syringae pv. phaseolicola (strain 1448A / Race 6)).